The sequence spans 456 residues: Glycerol-3-phosphate acyltransferase 4 (456 aa).

The N-terminal stretch at 1-37 (MFLLLPFDSLIVNLLGISLTVLFTLLLVFIIVPAIFG) is a signal peptide. Helical transmembrane passes span 156 to 176 (ISLR…CFLL) and 180 to 200 (IALA…VGYL). N247 carries an N-linked (GlcNAc...) asparagine glycan. The short motif at 248–253 (HTSPID) is the HXXXXD motif element. N-linked (GlcNAc...) asparagine glycans are attached at residues N327, N328, and N362.

The protein belongs to the 1-acyl-sn-glycerol-3-phosphate acyltransferase family. As to expression, ubiquitous. High levels in testis. Relatively high level of expression in skeletal muscle and heart. Relatively low level of expression in lung.

It is found in the endoplasmic reticulum membrane. It carries out the reaction sn-glycerol 3-phosphate + an acyl-CoA = a 1-acyl-sn-glycero-3-phosphate + CoA. The catalysed reaction is dodecanoyl-CoA + sn-glycerol 3-phosphate = 1-dodecanoyl-sn-glycerol 3-phosphate + CoA. It catalyses the reaction sn-glycerol 3-phosphate + hexadecanoyl-CoA = 1-hexadecanoyl-sn-glycero-3-phosphate + CoA. The enzyme catalyses sn-glycerol 3-phosphate + octadecanoyl-CoA = 1-octadecanoyl-sn-glycero-3-phosphate + CoA. It carries out the reaction sn-glycerol 3-phosphate + (9Z)-octadecenoyl-CoA = 1-(9Z-octadecenoyl)-sn-glycero-3-phosphate + CoA. The catalysed reaction is (9Z,12Z)-octadecadienoyl-CoA + sn-glycerol 3-phosphate = 1-(9Z,12Z)-octadecadienoyl-sn-glycero-3-phosphate + CoA. It participates in phospholipid metabolism; CDP-diacylglycerol biosynthesis; CDP-diacylglycerol from sn-glycerol 3-phosphate: step 1/3. Inhibited by N-ethylmaleimide (NEM). Converts glycerol-3-phosphate to 1-acyl-sn-glycerol-3-phosphate (lysophosphatidic acid or LPA) by incorporating an acyl moiety at the sn-1 position of the glycerol backbone. Active against both saturated and unsaturated long-chain fatty acyl-CoAs. Protects cells against lipotoxicity. In Homo sapiens (Human), this protein is Glycerol-3-phosphate acyltransferase 4.